A 398-amino-acid chain; its full sequence is Phosphoglycerate kinase (398 aa).

Substrate contacts are provided by residues 23–25, Arg38, 61–64, Arg122, and Arg155; these read DFN and HMGK. ATP contacts are provided by residues Lys206, Gly297, Glu328, and 354 to 357; that span reads GGDS.

The protein belongs to the phosphoglycerate kinase family. As to quaternary structure, monomer.

It is found in the cytoplasm. It carries out the reaction (2R)-3-phosphoglycerate + ATP = (2R)-3-phospho-glyceroyl phosphate + ADP. It functions in the pathway carbohydrate degradation; glycolysis; pyruvate from D-glyceraldehyde 3-phosphate: step 2/5. This chain is Phosphoglycerate kinase, found in Clostridium botulinum (strain Okra / Type B1).